Here is a 34-residue protein sequence, read N- to C-terminus: Small, acid-soluble spore protein M (34 aa).

Basic residues predominate over residues 1–10; sequence MKTRPKKAGQ. Positions 1–34 are disordered; it reads MKTRPKKAGQQKKTESKAIDSLDKKLGGPNRPST. Over residues 12–26 the composition is skewed to basic and acidic residues; that stretch reads KKTESKAIDSLDKKL.

The protein localises to the spore core. The chain is Small, acid-soluble spore protein M (sspM) from Bacillus subtilis (strain 168).